The following is a 124-amino-acid chain: Late histone H2A.2.1 (124 aa).

The segment covering 1-18 (MSGRGKGAKAKSKAKSRS) has biased composition (basic residues). A disordered region spans residues 1-21 (MSGRGKGAKAKSKAKSRSSRA). Ser-2 is modified (N-acetylserine). A Phosphoserine modification is found at Ser-2. Gln-104 is modified (N5-methylglutamine). A Glycyl lysine isopeptide (Lys-Gly) (interchain with G-Cter in ubiquitin) cross-link involves residue Lys-119.

Belongs to the histone H2A family. The nucleosome is a histone octamer containing two molecules each of H2A, H2B, H3 and H4 assembled in one H3-H4 heterotetramer and two H2A-H2B heterodimers. The octamer wraps approximately 147 bp of DNA. In terms of processing, monoubiquitination of Lys-119 gives a specific tag for epigenetic transcriptional repression. Post-translationally, phosphorylation of Ser-2 directly represses transcription.

The protein localises to the nucleus. It is found in the chromosome. Its function is as follows. Core component of nucleosome. Nucleosomes wrap and compact DNA into chromatin, limiting DNA accessibility to the cellular machineries which require DNA as a template. Histones thereby play a central role in transcription regulation, DNA repair, DNA replication and chromosomal stability. DNA accessibility is regulated via a complex set of post-translational modifications of histones, also called histone code, and nucleosome remodeling. This Psammechinus miliaris (Green sea urchin) protein is Late histone H2A.2.1.